Reading from the N-terminus, the 372-residue chain is UDP-N-acetylglucosamine--N-acetylmuramyl-(pentapeptide) pyrophosphoryl-undecaprenol N-acetylglucosamine transferase (372 aa).

UDP-N-acetyl-alpha-D-glucosamine-binding positions include 16-18 (TGG), Asn-128, Arg-164, Ser-192, Ile-250, and Gln-295.

It belongs to the glycosyltransferase 28 family. MurG subfamily.

The protein localises to the cell inner membrane. It carries out the reaction di-trans,octa-cis-undecaprenyl diphospho-N-acetyl-alpha-D-muramoyl-L-alanyl-D-glutamyl-meso-2,6-diaminopimeloyl-D-alanyl-D-alanine + UDP-N-acetyl-alpha-D-glucosamine = di-trans,octa-cis-undecaprenyl diphospho-[N-acetyl-alpha-D-glucosaminyl-(1-&gt;4)]-N-acetyl-alpha-D-muramoyl-L-alanyl-D-glutamyl-meso-2,6-diaminopimeloyl-D-alanyl-D-alanine + UDP + H(+). It participates in cell wall biogenesis; peptidoglycan biosynthesis. Its function is as follows. Cell wall formation. Catalyzes the transfer of a GlcNAc subunit on undecaprenyl-pyrophosphoryl-MurNAc-pentapeptide (lipid intermediate I) to form undecaprenyl-pyrophosphoryl-MurNAc-(pentapeptide)GlcNAc (lipid intermediate II). The polypeptide is UDP-N-acetylglucosamine--N-acetylmuramyl-(pentapeptide) pyrophosphoryl-undecaprenol N-acetylglucosamine transferase (Paraburkholderia xenovorans (strain LB400)).